The sequence spans 639 residues: Eukaryotic translation initiation factor 2-alpha kinase 2 (639 aa).

The 418-residue stretch at 171–588 (FEEYSLLGRG…LEVLNCGLLL (418 aa)) folds into the Protein kinase domain. Residues 177–185 (LGRGGFGSV) and Lys200 each bind ATP. Residues 298 to 320 (ISTSRKSSYSSTTESSNFENLES) are compositionally biased toward low complexity. A disordered region spans residues 298–322 (ISTSRKSSYSSTTESSNFENLESPR). The active-site Proton acceptor is the Asp417.

It belongs to the protein kinase superfamily. Ser/Thr protein kinase family. GCN2 subfamily. Autophosphorylated.

The enzyme catalyses L-seryl-[protein] + ATP = O-phospho-L-seryl-[protein] + ADP + H(+). It catalyses the reaction L-threonyl-[protein] + ATP = O-phospho-L-threonyl-[protein] + ADP + H(+). Mediates down-regulation of protein synthesis in response to stress conditions by the phosphorylation of the alpha subunit of eIF-2 (tif211) on 'Ser-52'. Protein synthesis is inhibited at the level of initiation. Activity is inhibited in the presence of heme. This is Eukaryotic translation initiation factor 2-alpha kinase 2 (hri2) from Schizosaccharomyces pombe (strain 972 / ATCC 24843) (Fission yeast).